A 397-amino-acid chain; its full sequence is 1-deoxy-D-xylulose 5-phosphate reductoisomerase (397 aa).

7 residues coordinate NADPH: T10, G11, S12, I13, G36, N38, and N124. Position 125 (K125) interacts with 1-deoxy-D-xylulose 5-phosphate. NADPH is bound at residue E126. D150 contributes to the Mn(2+) binding site. Residues S151, E152, S186, and H209 each coordinate 1-deoxy-D-xylulose 5-phosphate. E152 contacts Mn(2+). Residue G215 participates in NADPH binding. 4 residues coordinate 1-deoxy-D-xylulose 5-phosphate: S222, N227, K228, and E231. E231 is a Mn(2+) binding site.

It belongs to the DXR family. It depends on Mg(2+) as a cofactor. Mn(2+) is required as a cofactor.

It carries out the reaction 2-C-methyl-D-erythritol 4-phosphate + NADP(+) = 1-deoxy-D-xylulose 5-phosphate + NADPH + H(+). Its pathway is isoprenoid biosynthesis; isopentenyl diphosphate biosynthesis via DXP pathway; isopentenyl diphosphate from 1-deoxy-D-xylulose 5-phosphate: step 1/6. Its function is as follows. Catalyzes the NADPH-dependent rearrangement and reduction of 1-deoxy-D-xylulose-5-phosphate (DXP) to 2-C-methyl-D-erythritol 4-phosphate (MEP). This is 1-deoxy-D-xylulose 5-phosphate reductoisomerase from Photobacterium profundum (strain SS9).